The chain runs to 476 residues: Lactate utilization protein B (476 aa).

4Fe-4S ferredoxin-type domains lie at 304–334 (GTEFQPVLQCIRCAACVNVCPVYRHIGGHSY) and 353–382 (YDDYKELPYASSLCAACTEVCPVKIPLHEL). Positions 313, 316, 319, 323, 366, 369, and 373 each coordinate [4Fe-4S] cluster.

Belongs to the LutB/YkgF family.

In terms of biological role, is involved in L-lactate degradation and allows cells to grow with lactate as the sole carbon source. Has probably a role as an electron transporter during oxidation of L-lactate. The chain is Lactate utilization protein B from Geobacillus thermodenitrificans (strain NG80-2).